The following is a 340-amino-acid chain: Heat-inducible transcription repressor HrcA (340 aa).

Belongs to the HrcA family.

Its function is as follows. Negative regulator of class I heat shock genes (grpE-dnaK-dnaJ and groELS operons). Prevents heat-shock induction of these operons. This Burkholderia thailandensis (strain ATCC 700388 / DSM 13276 / CCUG 48851 / CIP 106301 / E264) protein is Heat-inducible transcription repressor HrcA.